A 454-amino-acid polypeptide reads, in one-letter code: Nuclear distribution protein PAC1-1 (454 aa).

The LisH domain maps to 9–41; it reads QAEELHRALIAYLSSNNLTSTAAALRAEIGLGE. Residues 71–93 form a disordered region; it reads RHTSQLSNATPTSRQNKDPVNWL. The span at 73–84 shows a compositional bias: polar residues; that stretch reads TSQLSNATPTSR. WD repeat units follow at residues 104–145, 147–187, 191–236, 239–278, 283–342, 344–383, and 388–450; these read SHRQ…RTIK, HTKT…KNIR, GHDH…CVKT, GHAE…PEPK, GHEH…IKIL, GHDN…RCVK, and AHAH…LNVR.

The protein belongs to the WD repeat LIS1/nudF family. In terms of assembly, self-associates. Interacts with NDL1 and dynein.

The protein resides in the cytoplasm. It localises to the cytoskeleton. It is found in the spindle pole. Functionally, positively regulates the activity of the minus-end directed microtubule motor protein dynein. May enhance dynein-mediated microtubule sliding by targeting dynein to the microtubule plus end. Required for nuclear migration during vegetative growth as well as development. Required for retrograde early endosome (EE) transport from the hyphal tip. Required for localization of dynein to the mitotic spindle poles. Recruits additional proteins to the dynein complex at SPBs. The protein is Nuclear distribution protein PAC1-1 of Chaetomium globosum (strain ATCC 6205 / CBS 148.51 / DSM 1962 / NBRC 6347 / NRRL 1970) (Soil fungus).